A 421-amino-acid chain; its full sequence is Probable indole-3-pyruvate monooxygenase YUCCA9 (421 aa).

29–34 contacts FAD; it reads GAGPSG. 196–201 provides a ligand contact to NADP(+); the sequence is GCGNSG.

Belongs to the FMO family. The cofactor is FAD.

It catalyses the reaction indole-3-pyruvate + NADPH + O2 + H(+) = (indol-3-yl)acetate + CO2 + NADP(+) + H2O. It participates in plant hormone metabolism; auxin biosynthesis. Involved in auxin biosynthesis. Belongs to the set of redundant YUCCA genes probably responsible for auxin biosynthesis in roots. In Arabidopsis thaliana (Mouse-ear cress), this protein is Probable indole-3-pyruvate monooxygenase YUCCA9 (YUC9).